A 34-amino-acid chain; its full sequence is Omega-ctenitoxin-Pn2a (34 aa).

Cystine bridges form between C2–C16, C9–C26, and C15–C28.

Belongs to the neurotoxin 02 (plectoxin) family. 01 (Tx3) subfamily. Expressed by the venom gland.

It is found in the secreted. In terms of biological role, inhibits all known high-voltage activated calcium channels (L-, P/Q- and R-type currents) (Cav), and most effectively the P/Q- (Cav2.1/CACNA1A) and R-type (Cav2.3/CACNA1E) currents. In rat brain, inhibits glutamate release, neuronal death and loss of neurotransmission in the hippocampus resulting from ischemia. In vivo, induces rapid general flaccid paralysis followed by death in 10-30 minutes at dose levels of 5 ug per mouse. The sequence is that of Omega-ctenitoxin-Pn2a from Phoneutria nigriventer (Brazilian armed spider).